The sequence spans 391 residues: Chaperone protein DnaJ (391 aa).

Residues 4–68 (DFYDVLGVSR…ETRQQYDQLG (65 aa)) enclose the J domain. Positions 53 to 79 (DVLTDEETRQQYDQLGHERFEEAEKRG) are enriched in basic and acidic residues. Disordered stretches follow at residues 53–94 (DVLT…MGGA) and 117–136 (FFGG…EQGR). 2 stretches are compositionally biased toward gly residues: residues 81–94 (TGNG…MGGA) and 119–129 (GGAGGGGGRGR). The CR-type zinc-finger motif lies at 152–234 (GVSKQVTVRR…CGGQGQTRER (83 aa)). Positions 165, 168, 182, 185, 208, 211, 222, and 225 each coordinate Zn(2+). CXXCXGXG motif repeat units follow at residues 165-172 (CADCGGSG), 182-189 (CPQCDGQG), 208-215 (CSRCGGEG), and 222-229 (CSTCGGQG).

This sequence belongs to the DnaJ family. Homodimer. It depends on Zn(2+) as a cofactor.

It is found in the cytoplasm. Its function is as follows. Participates actively in the response to hyperosmotic and heat shock by preventing the aggregation of stress-denatured proteins and by disaggregating proteins, also in an autonomous, DnaK-independent fashion. Unfolded proteins bind initially to DnaJ; upon interaction with the DnaJ-bound protein, DnaK hydrolyzes its bound ATP, resulting in the formation of a stable complex. GrpE releases ADP from DnaK; ATP binding to DnaK triggers the release of the substrate protein, thus completing the reaction cycle. Several rounds of ATP-dependent interactions between DnaJ, DnaK and GrpE are required for fully efficient folding. Also involved, together with DnaK and GrpE, in the DNA replication of plasmids through activation of initiation proteins. The protein is Chaperone protein DnaJ of Halobacterium salinarum (strain ATCC 29341 / DSM 671 / R1).